A 127-amino-acid polypeptide reads, in one-letter code: MSKASYVKFEVPQDLADKVLEAVRKAKESGKIKKGTNETTKAVERGQAKLVIIAEDVQPEEIVAHLPLLCDEKKIPYVYVSSKKALGEACGLQVATASAAILEPGEAKDLVDEIIKRVNEIKGKTSS.

It belongs to the eukaryotic ribosomal protein eL8 family. In terms of assembly, part of the 50S ribosomal subunit. Component of box C/D small ribonucleoprotein (sRNP) particles that contain rpl7ae, FlpA and nop5, plus a guide RNA. These sRNP particles form homodimers, giving rise to an asymmetric holoenzyme. Probably part of the RNase P complex.

The protein localises to the cytoplasm. In terms of biological role, multifunctional RNA-binding protein that recognizes the K-turn motif in ribosomal RNA, the RNA component of RNase P, box H/ACA, box C/D and box C'/D' sRNAs. This chain is Large ribosomal subunit protein eL8, found in Saccharolobus solfataricus (strain ATCC 35092 / DSM 1617 / JCM 11322 / P2) (Sulfolobus solfataricus).